We begin with the raw amino-acid sequence, 506 residues long: Cobyric acid synthase (506 aa).

The region spanning 251–448 (DITIAIVQLP…LHGLFDSDAF (198 aa)) is the GATase cobBQ-type domain. The Nucleophile role is filled by Cys332. Residue His440 is part of the active site.

It belongs to the CobB/CobQ family. CobQ subfamily.

It functions in the pathway cofactor biosynthesis; adenosylcobalamin biosynthesis. Its function is as follows. Catalyzes amidations at positions B, D, E, and G on adenosylcobyrinic A,C-diamide. NH(2) groups are provided by glutamine, and one molecule of ATP is hydrogenolyzed for each amidation. The chain is Cobyric acid synthase from Salmonella heidelberg (strain SL476).